A 258-amino-acid polypeptide reads, in one-letter code: Phycoerythrobilin:ferredoxin oxidoreductase (258 aa).

Belongs to the HY2 family.

It carries out the reaction (3Z)-phycoerythrobilin + oxidized 2[4Fe-4S]-[ferredoxin] = 15,16-dihydrobiliverdin + reduced 2[4Fe-4S]-[ferredoxin] + 2 H(+). Functionally, catalyzes the two-electron reduction of the C2 and C3(1) diene system of 15,16-dihydrobiliverdin. This Prochlorococcus marinus (strain NATL2A) protein is Phycoerythrobilin:ferredoxin oxidoreductase.